The following is a 290-amino-acid chain: Oxaloacetate decarboxylase (290 aa).

Position 53 (Ser53) interacts with substrate. Residue Asp91 participates in Mg(2+) binding. Substrate is bound by residues Arg162 and His238.

It belongs to the isocitrate lyase/PEP mutase superfamily. Oxaloacetate decarboxylase family. As to quaternary structure, homotetramer; dimer of dimers. Mg(2+) serves as cofactor.

The catalysed reaction is oxaloacetate + H(+) = pyruvate + CO2. Functionally, catalyzes the decarboxylation of oxaloacetate into pyruvate. Seems to play a role in maintaining cellular concentrations of bicarbonate and pyruvate. The polypeptide is Oxaloacetate decarboxylase (Ectopseudomonas mendocina (strain ymp) (Pseudomonas mendocina)).